The primary structure comprises 151 residues: MFQVFKPHAGEDYKYPRETETIWSHPYVVEGSHKSPLESLSLHGCLAAMAPSITSSEDSSPSQRDKKDLSLDLLLTRKKRSQGLHWSHWQGLNHMSIRIHTPEQGSPSLGQNWSWGNRKEKGVAQRQVPTTGTHSFFHCTSEGNKEKPHHF.

A disordered region spans residues G122 to F151.

This is an uncharacterized protein from Homo sapiens (Human).